We begin with the raw amino-acid sequence, 297 residues long: Ribosomal RNA small subunit methyltransferase H (297 aa).

S-adenosyl-L-methionine-binding positions include 34–36 (AGH), D54, F88, D106, and Q113. The tract at residues 272-297 (PLTAGEEETDRNPRARSAKLRAAEKK) is disordered.

This sequence belongs to the methyltransferase superfamily. RsmH family.

It is found in the cytoplasm. The catalysed reaction is cytidine(1402) in 16S rRNA + S-adenosyl-L-methionine = N(4)-methylcytidine(1402) in 16S rRNA + S-adenosyl-L-homocysteine + H(+). Specifically methylates the N4 position of cytidine in position 1402 (C1402) of 16S rRNA. This is Ribosomal RNA small subunit methyltransferase H from Acidobacterium capsulatum (strain ATCC 51196 / DSM 11244 / BCRC 80197 / JCM 7670 / NBRC 15755 / NCIMB 13165 / 161).